A 399-amino-acid polypeptide reads, in one-letter code: 1-deoxy-D-xylulose 5-phosphate reductoisomerase (399 aa).

Positions 10, 11, 12, 13, and 124 each coordinate NADPH. Residue Lys125 participates in 1-deoxy-D-xylulose 5-phosphate binding. Glu126 lines the NADPH pocket. Asp150 serves as a coordination point for Mn(2+). The 1-deoxy-D-xylulose 5-phosphate site is built by Ser151, Glu152, Ser186, and His209. Glu152 contacts Mn(2+). Residue Gly215 coordinates NADPH. Positions 222, 227, 228, and 231 each coordinate 1-deoxy-D-xylulose 5-phosphate. Glu231 contacts Mn(2+).

It belongs to the DXR family. Requires Mg(2+) as cofactor. The cofactor is Mn(2+).

The catalysed reaction is 2-C-methyl-D-erythritol 4-phosphate + NADP(+) = 1-deoxy-D-xylulose 5-phosphate + NADPH + H(+). The protein operates within isoprenoid biosynthesis; isopentenyl diphosphate biosynthesis via DXP pathway; isopentenyl diphosphate from 1-deoxy-D-xylulose 5-phosphate: step 1/6. Catalyzes the NADPH-dependent rearrangement and reduction of 1-deoxy-D-xylulose-5-phosphate (DXP) to 2-C-methyl-D-erythritol 4-phosphate (MEP). The sequence is that of 1-deoxy-D-xylulose 5-phosphate reductoisomerase from Psychromonas ingrahamii (strain DSM 17664 / CCUG 51855 / 37).